The sequence spans 137 residues: MLQPKRTKYRKVHKGRNDGLSWSANAVSFGEYGLKATAHGQLTARQIEAARRSISRYVKRGGKMWIRVFPDKPITKKPIEVRMGSGKGNVEYWVAQIQPGRMIYEIEGVSEEVAREAFRLAAAKLSVTTTFVTRTVR.

This sequence belongs to the universal ribosomal protein uL16 family. Part of the 50S ribosomal subunit.

In terms of biological role, binds 23S rRNA and is also seen to make contacts with the A and possibly P site tRNAs. This Stenotrophomonas maltophilia (strain K279a) protein is Large ribosomal subunit protein uL16.